The chain runs to 239 residues: ATP-dependent dethiobiotin synthetase BioD (239 aa).

An ATP-binding site is contributed by 15–20 (EIGKTF). Residue T19 coordinates Mg(2+). K40 is a catalytic residue. Residues D57, 118–121 (EGVG), and 178–179 (NH) each bind ATP. 2 residues coordinate Mg(2+): D57 and E118.

Belongs to the dethiobiotin synthetase family. Homodimer. It depends on Mg(2+) as a cofactor.

It is found in the cytoplasm. The catalysed reaction is (7R,8S)-7,8-diammoniononanoate + CO2 + ATP = (4R,5S)-dethiobiotin + ADP + phosphate + 3 H(+). The protein operates within cofactor biosynthesis; biotin biosynthesis; biotin from 7,8-diaminononanoate: step 1/2. Catalyzes a mechanistically unusual reaction, the ATP-dependent insertion of CO2 between the N7 and N8 nitrogen atoms of 7,8-diaminopelargonic acid (DAPA, also called 7,8-diammoniononanoate) to form a ureido ring. The chain is ATP-dependent dethiobiotin synthetase BioD from Burkholderia cenocepacia (strain HI2424).